The following is an 890-amino-acid chain: V-type proton ATPase subunit a, Golgi isoform (890 aa).

At methionine 1 the chain carries N-acetylmethionine. Residues 1–450 lie on the Cytoplasmic side of the membrane; sequence MNQEEAIFRS…DAYGIATYKE (450 aa). A coiled-coil region spans residues 113–154; that stretch reads LENVNDMVKEITDCESRARQLDESLDSLRSKLNDLLEQRQVI. 2 positions are modified to phosphoserine: serine 223 and serine 228. Residues 297 to 347 adopt a coiled-coil conformation; it reads LKKVKRVIDSLNGKIVSLNTRSSELVDTLNRQIDDLQRILDTTEQTLHTEL. The chain crosses the membrane as a helical span at residues 451-469; the sequence is INAGLATVVTFPFMFAIMF. At 470–471 the chain is on the vacuolar side; the sequence is GD. The helical transmembrane segment at 472-488 threads the bilayer; it reads MGHGFILFLMALFLVLN. At 489-502 the chain is on the cytoplasmic side; it reads ERKFGAMHRDEIFD. Residues 503 to 532 traverse the membrane as a helical segment; the sequence is MAFTGRYVLLLMGAFSVYTGLLYNDIFSKS. Over 533–580 the chain is Vacuolar; it reads MTIFKSGWQWPSTFRKGESIEAKKTGVYPFGLDFAWHGTDNGLLFSNS. Residues 581-600 form a helical membrane-spanning segment; it reads YKMKLSILMGYAHMTYSFMF. The Cytoplasmic portion of the chain corresponds to 601–618; that stretch reads SYINYRAKNSKVDIIGNF. Residues 619–639 traverse the membrane as a helical segment; the sequence is IPGLVFMQSIFGYLSWAIVYK. Over 640–682 the chain is Vacuolar; sequence WSKDWIKDDKPAPGLLNMLINMFLAPGTIDDQLYSGQAKLQVV. A helical transmembrane segment spans residues 683-702; it reads LLLAALVCVPWLLLYKPLTL. Residues 703-779 lie on the Cytoplasmic side of the membrane; that stretch reads RRLNKNGGGG…DVMIHQVIHT (77 aa). A helical transmembrane segment spans residues 780-804; that stretch reads IEFCLNCISHTASYLRLWALSLAHA. At 805–828 the chain is on the vacuolar side; it reads QLSSVLWDMTISNAFSSKNSGSPL. Residues 829–867 form a helical membrane-spanning segment; it reads AVMKVVFLFAMWFVLTVCILVFMEGTSAMLHALRLHWVE. Topologically, residues 868 to 890 are cytoplasmic; it reads AMSKFFEGEGYAYEPFSFRAIIE.

It belongs to the V-ATPase 116 kDa subunit family. V-ATPase is a heteromultimeric enzyme composed of a peripheral catalytic V1 complex (components A to H) attached to an integral membrane V0 proton pore complex (components: a, c, c', c'', d, e, f and VOA1). In terms of processing, glycosylated.

It localises to the endosome membrane. The protein localises to the golgi apparatus membrane. Its function is as follows. Subunit of the V0 complex of vacuolar(H+)-ATPase (V-ATPase), a multisubunit enzyme composed of a peripheral complex (V1) that hydrolyzes ATP and a membrane integral complex (V0) that translocates protons. V-ATPase is responsible for acidifying and maintaining the pH of intracellular compartments. Is present only in Golgi- and endosome-residing V-ATPase complexes; enzymes containing this subunit have a 4-fold lower ratio of proton transport to ATP hydrolysis than complexes containing the vacuolar isoform and do not dissociate V1 and V0 in response to glucose depletion. The polypeptide is V-type proton ATPase subunit a, Golgi isoform (STV1) (Saccharomyces cerevisiae (strain ATCC 204508 / S288c) (Baker's yeast)).